An 816-amino-acid polypeptide reads, in one-letter code: MAMWQGAMDNRGFQRGSFSSFQNSSSDEDLMDIPATAMDFSMRDDVPPLDREVGEDKSYNGGGIGSSNRIMDFLEEPIPGVGTYDDFNTIDWVREKSRDRDRHREITNKSKESTWALIHSVSDAFSGWLLMLLIGLLSGSLAGLIDISAHWMTDLKEGICTGGFWFNHEHCCWNSEHVTFEERDKCPEWNSWSQLIISTDEGAFAYIVNYFMYVLWALLFAFLAVSLVKVFAPYACGSGIPEIKTILSGFIIRGYLGKWTLVIKTITLVLAVSSGLSLGKEGPLVHVACCCGNILCHCFNKYRKNEAKRREVLSAAAAAGVSVAFGAPIGGVLFSLEEVSYYFPLKTLWRSFFAALVAAFTLRSINPFGNSRLVLFYVEFHTPWHLFELVPFILLGIFGGLWGALFIRTNIAWCRKRKTTQLGKYPVIEVLVVTAITAILAFPNEYTRMSTSELISELFNDCGLLDSSKLCDYENRFNTSKGGELPDRPAGVGVYSAMWQLALTLILKIVITIFTFGMKIPSGLFIPSMAVGAIAGRLLGVGMEQLAYYHQEWTVFNSWCSQGADCITPGLYAMVGAAACLGGVTRMTVSLVVIMFELTGGLEYIVPLMAAAMTSKWVADALGREGIYDAHIRLNGYPFLEAKEEFAHKTLAMDVMKPRRNDPLLTVLTQDSMTVEDVETIISETTYSGFPVVVSRESQRLVGFVLRRDLIISIENARKKQDGVVSTSIIYFTEHSPPLPPYTPPTLKLRNILDLSPFTVTDLTPMEIVVDIFRKLGLRQCLVTHNGRLLGIITKKDVLKHIAQMANQDPDSILFN.

Residues 1–124 (MAMWQGAMDN…WALIHSVSDA (124 aa)) are Cytoplasmic-facing. A run of 2 helical transmembrane segments spans residues 125–162 (FSGW…ICTG) and 208–231 (VNYF…VKVF). The short motif at 237-241 (GSGIP) is the Selectivity filter part_1 element. Residue S238 coordinates chloride. Positions 240–247 (IPEIKTIL) form an intramembrane region, helical. The next 2 membrane-spanning stretches (helical) occupy residues 256–275 (LGKW…VSSG) and 281–300 (EGPL…HCFN). Positions 279-283 (GKEGP) match the Selectivity filter part_2 motif. Intramembrane regions (helical) lie at residues 312 to 324 (VLSA…VSVA) and 328 to 336 (PIGGVLFSL). A run of 5 helical transmembrane segments spans residues 348–366 (LWRS…RSIN), 389–414 (LVPF…IAWC), 422–442 (LGKY…ILAF), 498–518 (MWQL…TFGM), and 523–542 (GLFI…LGVG). Positions 523–527 (GLFIP) match the Selectivity filter part_3 motif. Residue F525 coordinates chloride. An intramembrane region (helical) is located at residues 570–584 (GLYAMVGAAACLGGV). The segment at residues 585–587 (TRM) is an intramembrane region (note=Loop between two helices). Positions 588 to 599 (TVSLVVIMFELT) form an intramembrane region, helical. The note=Loop between two helices intramembrane region spans 600–604 (GGLEY). Residues 605-622 (IVPLMAAAMTSKWVADAL) form a helical membrane-spanning segment. The Cytoplasmic portion of the chain corresponds to 623–816 (GREGIYDAHI…NQDPDSILFN (194 aa)). Chloride is bound at residue Y628. CBS domains follow at residues 656–720 (MKPR…ARKK) and 752–812 (ILDL…DPDS). ATP contacts are provided by residues T666, 687 to 689 (YSG), and 794 to 797 (TKKD).

The protein belongs to the chloride channel (TC 2.A.49) family. ClC-5/CLCN5 subfamily. In terms of assembly, interacts with NEDD4 and NEDD4L. In terms of processing, ubiquitinated by NEDD4L in the presence of albumin; which promotes endocytosis and proteasomal degradation.

It localises to the golgi apparatus membrane. It is found in the endosome membrane. The protein localises to the cell membrane. The catalysed reaction is 2 chloride(in) + H(+)(out) = 2 chloride(out) + H(+)(in). In terms of biological role, proton-coupled chloride transporter. Functions as antiport system and exchanges chloride ions against protons. Important for normal acidification of the endosome lumen. May play an important role in renal tubular function. The CLC channel family contains both chloride channels and proton-coupled anion transporters that exchange chloride or another anion for protons. The absence of conserved gating glutamate residues is typical for family members that function as channels. This is H(+)/Cl(-) exchange transporter 5 (CLCN5) from Pongo abelii (Sumatran orangutan).